The sequence spans 283 residues: Protein FAM78A (283 aa).

Belongs to the FAM78 family.

In Mus musculus (Mouse), this protein is Protein FAM78A (Fam78a).